Here is a 429-residue protein sequence, read N- to C-terminus: Putative protease Do-like 14 (429 aa).

A disordered region spans residues 87 to 113 (KSEAPINDEKGVSVEASDSSSKPSNGY). Residues 113-338 (YLGRDTIANA…IRPWIGLKMV (226 aa)) are serine protease. Active-site charge relay system residues include H165, D203, and S281. Residues 318–424 (IIEHFKKSGR…RVTLEVIPEE (107 aa)) form the PDZ domain.

Belongs to the peptidase S1C family.

In terms of biological role, putative serine protease. This is Putative protease Do-like 14 (DEGP14) from Arabidopsis thaliana (Mouse-ear cress).